The primary structure comprises 194 residues: Small ribosomal subunit protein eS7 (194 aa).

Belongs to the eukaryotic ribosomal protein eS7 family.

In Drosophila yakuba (Fruit fly), this protein is Small ribosomal subunit protein eS7 (RpS7).